The primary structure comprises 868 residues: Protein translocase subunit SecA (868 aa).

Residues Gln-88, Gly-106–Thr-110, and Asp-509 contribute to the ATP site. The span at Asn-816 to Gln-827 shows a compositional bias: polar residues. The segment at Asn-816–Ala-868 is disordered. Residues Cys-845, Cys-847, Cys-856, and His-857 each contribute to the Zn(2+) site.

It belongs to the SecA family. In terms of assembly, monomer and homodimer. Part of the essential Sec protein translocation apparatus which comprises SecA, SecYEG and auxiliary proteins SecDF-YajC and YidC. Requires Zn(2+) as cofactor.

The protein resides in the cell inner membrane. Its subcellular location is the cytoplasm. The enzyme catalyses ATP + H2O + cellular proteinSide 1 = ADP + phosphate + cellular proteinSide 2.. Functionally, part of the Sec protein translocase complex. Interacts with the SecYEG preprotein conducting channel. Has a central role in coupling the hydrolysis of ATP to the transfer of proteins into and across the cell membrane, serving as an ATP-driven molecular motor driving the stepwise translocation of polypeptide chains across the membrane. This chain is Protein translocase subunit SecA, found in Campylobacter concisus (strain 13826).